The sequence spans 363 residues: Spermidine/putrescine import ATP-binding protein PotA (363 aa).

One can recognise an ABC transporter domain in the interval 6–236; that stretch reads VEFKNVIKKY…PINHFVADFI (231 aa). An ATP-binding site is contributed by 38-45; it reads GPSGCGKT.

It belongs to the ABC transporter superfamily. Spermidine/putrescine importer (TC 3.A.1.11.1) family. The complex is composed of two ATP-binding proteins (PotA), two transmembrane proteins (PotB and PotC) and a solute-binding protein (PotD).

It is found in the cell membrane. The catalysed reaction is ATP + H2O + polyamine-[polyamine-binding protein]Side 1 = ADP + phosphate + polyamineSide 2 + [polyamine-binding protein]Side 1.. Its function is as follows. Part of the ABC transporter complex PotABCD involved in spermidine/putrescine import. Responsible for energy coupling to the transport system. This chain is Spermidine/putrescine import ATP-binding protein PotA, found in Latilactobacillus sakei subsp. sakei (strain 23K) (Lactobacillus sakei subsp. sakei).